The sequence spans 49 residues: Small, acid-soluble spore protein K (49 aa).

The interval 1–49 is disordered; that stretch reads MRNKAKGFPNQVNHKFEGEPGATDAYASKRPNGETNTRPQERMRASGKR. Positions 39 to 49 are enriched in basic and acidic residues; the sequence is PQERMRASGKR.

Belongs to the SspK family.

It is found in the spore core. In Bacillus pumilus (strain SAFR-032), this protein is Small, acid-soluble spore protein K.